The primary structure comprises 2692 residues: Thyroglobulin (2692 aa).

The N-terminal stretch at 1 to 19 (MALALWVFALLGSACLVSA) is a signal peptide. Position 24 is an iodotyrosine; alternate (tyrosine 24). Sulfotyrosine; alternate is present on tyrosine 24. At tyrosine 24 the chain carries Thyroxine; alternate. At tyrosine 24 the chain carries Triiodothyronine; alternate. 3 consecutive Thyroglobulin type-1 domains span residues 31-92 (LRPC…PVAC), 93-160 (LSFC…PARC), and 161-248 (PGSC…LAGT). 8 disulfides stabilise this stretch: cysteine 34–cysteine 52, cysteine 63–cysteine 70, cysteine 72–cysteine 92, cysteine 96–cysteine 120, cysteine 131–cysteine 138, cysteine 140–cysteine 160, cysteine 164–cysteine 183, and cysteine 194–cysteine 235. Tyrosine 108 is modified (iodotyrosine). Asparagine 110 is a glycosylation site (N-linked (GlcNAc...) asparagine). Tyrosine 149 is modified (iodotyrosine; alternate). The residue at position 149 (tyrosine 149) is a Diiodotyrosine; alternate. N-linked (GlcNAc...) asparagine glycosylation is present at asparagine 198. Residues tyrosine 234 and tyrosine 258 each carry the iodotyrosine modification. Positions 298–358 (PTKCEVERFA…TRRPSEPLSC (61 aa)) constitute a Thyroglobulin type-1 4 domain. 9 cysteine pairs are disulfide-bonded: cysteine 301–cysteine 319, cysteine 330–cysteine 336, cysteine 338–cysteine 358, cysteine 364–cysteine 621, cysteine 408–cysteine 609, cysteine 632–cysteine 637, cysteine 639–cysteine 659, cysteine 663–cysteine 688, and cysteine 699–cysteine 704. 3 N-linked (GlcNAc...) asparagine glycosylation sites follow: asparagine 485, asparagine 497, and asparagine 546. 3 Thyroglobulin type-1 domains span residues 606 to 659 (SQGC…RPRC), 660 to 727 (PTAC…PKQC), and 728 to 923 (PTPC…VPAC). Residue tyrosine 705 is modified to Iodotyrosine; alternate. A Thyroxine; alternate modification is found at tyrosine 705. Tyrosine 705 bears the Triiodothyronine; alternate mark. The residue at position 705 (tyrosine 705) is a Diiodotyrosine; alternate. 13 cysteine pairs are disulfide-bonded: cysteine 706–cysteine 727, cysteine 731–cysteine 764, cysteine 775–cysteine 900, cysteine 902–cysteine 923, cysteine 927–cysteine 1033, cysteine 1044–cysteine 1051, cysteine 1053–cysteine 1079, cysteine 1128–cysteine 1147, cysteine 1151–cysteine 1171, cysteine 1183–cysteine 1190, cysteine 1192–cysteine 1212, cysteine 1237–cysteine 1287, and cysteine 1262–cysteine 1278. Residue asparagine 749 is glycosylated (N-linked (GlcNAc...) asparagine). Tyrosine 786 bears the Iodotyrosine mark. Asparagine 855 carries N-linked (GlcNAc...) asparagine glycosylation. The residue at position 868 (tyrosine 868) is an Iodotyrosine; alternate. Tyrosine 868 carries the diiodotyrosine; alternate modification. Tyrosine 885 bears the Diiodotyrosine mark. The N-linked (GlcNAc...) asparagine glycan is linked to asparagine 949. Tyrosine 994 carries the post-translational modification Iodotyrosine; alternate. Position 994 is a diiodotyrosine; alternate (tyrosine 994). 3 Thyroglobulin type-1 domains span residues 1021–1079 (SGPL…PTPC), 1088–1147 (LSAW…SAPC), and 1148–1212 (PGLC…QPAC). The N-linked (GlcNAc...) asparagine glycan is linked to asparagine 1142. The residue at position 1241 (tyrosine 1241) is an Iodotyrosine. Tyrosine 1241 carries the post-translational modification Thyroxine. 2 N-linked (GlcNAc...) asparagine glycosylation sites follow: asparagine 1296 and asparagine 1384. Cystine bridges form between cysteine 1372/cysteine 1392, cysteine 1395/cysteine 1406, cysteine 1409/cysteine 1423, cysteine 1426/cysteine 1443, cysteine 1447/cysteine 1456, cysteine 1476/cysteine 1498, cysteine 1535/cysteine 1559, cysteine 1539/cysteine 1545, cysteine 1571/cysteine 1594, cysteine 1656/cysteine 1681, cysteine 1660/cysteine 1666, cysteine 1665/cysteine 1766, and cysteine 1692/cysteine 1709. Type II repeat units follow at residues 1389-1402 (PLGCVRCPEGSYFQ), 1403-1419 (EEQCIPCPAGFYQEQTG), and 1420-1436 (SLACAPCPAGTTTTSVG). Tyrosine 1400 is subject to Iodotyrosine; alternate. Tyrosine 1400 bears the Diiodotyrosine; alternate mark. The Thyroglobulin type-1 11 domain maps to 1444 to 1498 (VTACQRDEAGLQCDQDGQYRASQRDRASGKAFCVDSEGRRLPWSETQAPLVDAQC). The Type IIIA repeat unit spans residues 1535 to 1655 (CLADCARDEA…GASLTEAHLF (121 aa)). Residues 1656–1823 (CLLACDRDSC…LFSLQQAHLW (168 aa)) form a Type IIIB repeat. Asparagine 1800 is a glycosylation site (N-linked (GlcNAc...) asparagine). Disulfide bonds link cysteine 1824–cysteine 1850, cysteine 1828–cysteine 1835, cysteine 1859–cysteine 1870, cysteine 1927–cysteine 1955, cysteine 1931–cysteine 1937, cysteine 1936–cysteine 2007, cysteine 1966–cysteine 1979, cysteine 2061–cysteine 2085, cysteine 2065–cysteine 2071, and cysteine 2094–cysteine 2103. One copy of the Type IIIA repeat lies at 1824-1926 (CLSRCVQEPS…DKAISSGFFE (103 aa)). Residues 1927–2060 (CERLCDVDPC…VGDFSAARER (134 aa)) form a Type IIIB repeat. N-linked (GlcNAc...) asparagine glycosylation occurs at asparagine 1944. One copy of the Type IIIA repeat lies at 2061 to 2118 (CLLECSRHQACLVTTLQTRPGAVRCMFYADTQSCTHSLQAQNCQLLLREEATHIYRKP). An Iodotyrosine modification is found at tyrosine 2115. Residues 2119–2692 (DIPLPGLGSS…PELASKSYSK (574 aa)) form a cholinesterase-like (ChEL) region. N-linked (GlcNAc...) asparagine glycosylation is found at asparagine 2181 and asparagine 2226. Residue tyrosine 2467 is modified to Thyroxine. Tyrosine 2500 bears the Iodotyrosine; alternate mark. The residue at position 2500 (tyrosine 2500) is a Thyroxine; alternate. Tyrosine 2500 bears the Triiodothyronine; alternate mark. Tyrosine 2500 bears the Diiodotyrosine; alternate mark. An iodotyrosine mark is found at tyrosine 2514 and tyrosine 2544. Cysteines 2518 and 2642 form a disulfide. The residue at position 2624 (tyrosine 2624) is a Diiodotyrosine. The segment covering 2658-2671 (EAEDGPLAESEEED) has biased composition (acidic residues). The disordered stretch occupies residues 2658–2692 (EAEDGPLAESEEEDRPGLTEDLLGLPELASKSYSK). Residue tyrosine 2690 is modified to Iodotyrosine; alternate. A Thyroxine; alternate modification is found at tyrosine 2690. Triiodothyronine; alternate is present on tyrosine 2690. At tyrosine 2690 the chain carries Diiodotyrosine; alternate.

Belongs to the type-B carboxylesterase/lipase family. As to quaternary structure, monomer. Homodimer (via ChEL region); occurs in the endoplasmic reticulum and is required for export to the Golgi apparatus. Homooligomer; disulfide-linked; stored in this form in the thyroid follicle lumen. In terms of processing, iodinated on tyrosine residues by TPO. There are 4 pairs of iodinated tyrosines used for coupling: acceptor Tyr-24 is coupled to donor Tyr-149 or Tyr-234, acceptor Tyr-2500 is coupled to donor Tyr-2467, acceptor Tyr-2690 in monomer 1 is coupled to donor Tyr-2690 in monomer 2 and acceptor Tyr-1241 in monomer 1 is coupled to donor Tyr-108 in monomer 2. Post-translationally, sulfated tyrosines are desulfated during iodination. Undergoes sequential proteolysis by cathepsins to release thyroxine (T4) and triiodothyronine (T3) hormones. In the thyroid follicle lumen, cross-linked TG (storage form) is solubilized by limited proteolysis mediated by cathepsins CTSB and/or CTSL. Partially cleaved TG is further processed by CTSK/cathepsin K and/or CTSL resulting in the release of T4. Following endocytosis, further processing occurs leading to the release of T3 and more T4 hormones. As to expression, expressed in thyroid epithelial cells.

The protein resides in the secreted. Functionally, acts as a substrate for the production of iodinated thyroid hormones thyroxine (T4) and triiodothyronine (T3). The synthesis of T3 and T4 involves iodination of selected tyrosine residues of TG/thyroglobulin followed by their oxidative coupling. Following TG re-internalization and lysosomal-mediated proteolysis, T3 and T4 are released from the polypeptide backbone leading to their secretion into the bloodstream. One dimer produces 7 thyroid hormone molecules. The polypeptide is Thyroglobulin (Sus scrofa (Pig)).